The sequence spans 308 residues: Pantothenate kinase (308 aa).

93-100 (GSVAVGKS) lines the ATP pocket.

The protein belongs to the prokaryotic pantothenate kinase family.

It localises to the cytoplasm. The catalysed reaction is (R)-pantothenate + ATP = (R)-4'-phosphopantothenate + ADP + H(+). Its pathway is cofactor biosynthesis; coenzyme A biosynthesis; CoA from (R)-pantothenate: step 1/5. In Corynebacterium aurimucosum (strain ATCC 700975 / DSM 44827 / CIP 107346 / CN-1) (Corynebacterium nigricans), this protein is Pantothenate kinase.